Reading from the N-terminus, the 115-residue chain is NAD(P)H-quinone oxidoreductase subunit M (115 aa).

The protein belongs to the complex I NdhM subunit family. In terms of assembly, NDH-1 can be composed of about 15 different subunits; different subcomplexes with different compositions have been identified which probably have different functions.

It is found in the cellular thylakoid membrane. The catalysed reaction is a plastoquinone + NADH + (n+1) H(+)(in) = a plastoquinol + NAD(+) + n H(+)(out). It catalyses the reaction a plastoquinone + NADPH + (n+1) H(+)(in) = a plastoquinol + NADP(+) + n H(+)(out). Its function is as follows. NDH-1 shuttles electrons from an unknown electron donor, via FMN and iron-sulfur (Fe-S) centers, to quinones in the respiratory and/or the photosynthetic chain. The immediate electron acceptor for the enzyme in this species is believed to be plastoquinone. Couples the redox reaction to proton translocation, and thus conserves the redox energy in a proton gradient. Cyanobacterial NDH-1 also plays a role in inorganic carbon-concentration. In Prochlorococcus marinus (strain MIT 9515), this protein is NAD(P)H-quinone oxidoreductase subunit M.